Consider the following 351-residue polypeptide: Pinopsin (351 aa).

At 1-30 the chain is on the extracellular side; the sequence is MSSNSSQAPPNGTPGPFDGPQWPYQAPQST. A glycan (N-linked (GlcNAc...) asparagine) is linked at asparagine 4. The helical transmembrane segment at 31–55 threads the bilayer; sequence YVGVAVLMGTVVACASVVNGLVIVV. Residues 56 to 67 are Cytoplasmic-facing; that stretch reads SICYKKLRSPLN. The helical transmembrane segment at 68 to 92 threads the bilayer; it reads YILVNLAVADLLVTLCGSSVSLSNN. At 93 to 107 the chain is on the extracellular side; the sequence is INGFFVFGRRMCELE. A disulfide bond links cysteine 104 and cysteine 181. The helical transmembrane segment at 108–127 threads the bilayer; it reads GFMVSLTGIVGLWSLAILAL. Residues 128 to 146 lie on the Cytoplasmic side of the membrane; the sequence is ERYVVVCKPLGDFQFQRRH. A helical transmembrane segment spans residues 147–170; the sequence is AVSGCAFTWGWALLWSAPPLLGWS. Residues 171–194 lie on the Extracellular side of the membrane; the sequence is SYVPEGLRTSCGPNWYTGGSNNNS. N-linked (GlcNAc...) asparagine glycosylation occurs at asparagine 192. Residues 195–222 traverse the membrane as a helical segment; that stretch reads YILSLFVTCFVLPLSLILFSYTNLLLTL. The Cytoplasmic portion of the chain corresponds to 223–244; the sequence is RAAAAQQKEADTTQRAEREVTR. A helical transmembrane segment spans residues 245–268; that stretch reads MVIVMVMAFLLCWLPYSTFALVVA. The Extracellular portion of the chain corresponds to 269–276; it reads THKGIIIQ. Residues 277–301 form a helical membrane-spanning segment; the sequence is PVLASLPSYFSKTATVYNPIIYVFM. Lysine 288 carries the post-translational modification N6-(retinylidene)lysine. At 302–351 the chain is on the cytoplasmic side; that stretch reads NKQFQSCLLEMLCCGYQPQRTGKASPGTPGPHADVTAAGLRNKVMPAHPV. Residues cysteine 314 and cysteine 315 are each lipidated (S-palmitoyl cysteine).

The protein belongs to the G-protein coupled receptor 1 family. Opsin subfamily. Phosphorylated on some or all of the serine and threonine residues present in the C-terminal region. Pineal gland.

Its subcellular location is the membrane. In terms of biological role, produces a slow and prolonged phototransduction response consistent with the non-visual function of pineal photoreception. This Gallus gallus (Chicken) protein is Pinopsin.